A 134-amino-acid chain; its full sequence is Probable salivary secreted peptide (134 aa).

Positions 1–24 (MGAQKTIAYLAIIAIAVIFAQVNT) are cleaved as a signal peptide.

It localises to the secreted. The protein is Probable salivary secreted peptide of Bombus ignitus (Bumblebee).